The following is a 305-amino-acid chain: Transmembrane protein 74 (305 aa).

2 disordered regions span residues 52-88 (ATEM…LLHS) and 123-143 (RNRS…GWEN). The span at 58–78 (SKLSSSPASPSSSLQNSTLQP) shows a compositional bias: low complexity. Helical transmembrane passes span 178–198 (FISA…SYIV) and 232–252 (VIAG…LLMM).

The protein belongs to the TMEM74 family. In terms of tissue distribution, expressed in heart, lung, and placenta.

The protein localises to the lysosome membrane. It is found in the cytoplasmic vesicle. Its subcellular location is the autophagosome membrane. In terms of biological role, plays an essential role in autophagy. TMEM74-induced autophagy may involve PI3K signal transduction. In Homo sapiens (Human), this protein is Transmembrane protein 74 (TMEM74).